The primary structure comprises 206 residues: Small ribosomal subunit protein uS4 (206 aa).

In terms of domain architecture, S4 RNA-binding spans 96-156 (CRLDNVVYRM…EKAKNQLRIV (61 aa)).

It belongs to the universal ribosomal protein uS4 family. Part of the 30S ribosomal subunit. Contacts protein S5. The interaction surface between S4 and S5 is involved in control of translational fidelity.

Its function is as follows. One of the primary rRNA binding proteins, it binds directly to 16S rRNA where it nucleates assembly of the body of the 30S subunit. With S5 and S12 plays an important role in translational accuracy. The protein is Small ribosomal subunit protein uS4 of Pseudomonas savastanoi pv. phaseolicola (strain 1448A / Race 6) (Pseudomonas syringae pv. phaseolicola (strain 1448A / Race 6)).